The primary structure comprises 506 residues: MPSKTKYNLVDDGHDLRIPLHNEDAFQHGICFEAKYVGSLDVPRPNSRVEIVAAMRRIRYEFKAKNIKKKKVSIMVSVDGVKVILKKKKKLLLLQKKEWTWDESKMLVMQDPIYRIFYVSHDSQDLKIFSYIARDGASNIFRCNVFKSKKKSQAMRIVRTVGQAFEVCHKLSLQHTQQNADGQEDGESERNSNSSGDPGRQLTGAERASTATAEETDIDAVEVPLPGNDVLEFSRGVTDLDAVGKEGGSHTGSKVSHPQEPMLTASPRMLLPSSSSKPPGLGTETPLSTHHQMQLLQQLLQQQQQQTQVAVAQVHLLKDQLAAEAAARLEAQARVHQLLLQNKDMLQHISLLVKQVQELELKLSGQNAMGSQDSLLEITFRSGALPVLCDPTTPKPEDLHSPPLGAGLADFAHPAGSPLGRRDCLVKLECFRFLPPEDTPPPAQGEALLGGLELIKFRESGIASEYESNTDESEERDSWSQEELPRLLNVLQRQELGDGLDDEIAV.

The 171-residue stretch at 26 to 196 folds into the PID domain; that stretch reads FQHGICFEAK…ESERNSNSSG (171 aa). Disordered stretches follow at residues 175 to 224 and 241 to 260; these read HTQQ…VEVP and DAVG…HPQE. Serine 188, serine 192, and serine 195 each carry phosphoserine. Residues 203 to 213 are compositionally biased toward low complexity; that stretch reads TGAERASTATA. Serine 266 is subject to Phosphoserine. Residues 322–363 adopt a coiled-coil conformation; that stretch reads AAEAAARLEAQARVHQLLLQNKDMLQHISLLVKQVQELELKL. Serine 371, serine 374, serine 401, and serine 417 each carry phosphoserine. Positions 494–506 are interaction with NOS1; it reads QELGDGLDDEIAV. The PDZ-binding signature appears at 504–506; that stretch reads IAV.

In terms of assembly, interacts with the PDZ domain of NOS1 or the second PDZ domain of DLG4 through its C-terminus. Interacts with RASD1 and SYN1, SYN2 and SYN3 via its PID domain. Forms a ternary complex with NOS1 and RASD1. Forms a ternary complex with NOS1 and SYN1. In terms of tissue distribution, expressed in kidney glomeruli podocytes.

It localises to the cell projection. The protein resides in the filopodium. Its subcellular location is the podosome. Functionally, adapter protein involved in neuronal nitric-oxide (NO) synthesis regulation via its association with nNOS/NOS1. The complex formed with NOS1 and synapsins is necessary for specific NO and synapsin functions at a presynaptic level. Mediates an indirect interaction between NOS1 and RASD1 leading to enhance the ability of NOS1 to activate RASD1. Competes with DLG4 for interaction with NOS1, possibly affecting NOS1 activity by regulating the interaction between NOS1 and DLG4. In kidney podocytes, plays a role in podosomes and filopodia formation through CDC42 activation. The chain is Carboxyl-terminal PDZ ligand of neuronal nitric oxide synthase protein from Homo sapiens (Human).